Consider the following 120-residue polypeptide: Piercer of microtubule wall 2 protein (120 aa).

Residues 1-10 (MTECDWEKKS) are compositionally biased toward basic and acidic residues. The disordered stretch occupies residues 1–25 (MTECDWEKKSTSASNSDTEMKPELP).

This sequence belongs to the PIERCE2 family. As to quaternary structure, microtubule inner protein component of sperm flagellar doublet microtubules. Interacts with CFAP53, ODAD1 and ODAD3; the interactions link the outer dynein arms docking complex (ODA-DC) to the internal microtubule inner proteins (MIP) in cilium axoneme. Expressed in trachea multiciliated cells.

The protein resides in the cytoplasm. It localises to the cytoskeleton. The protein localises to the cilium axoneme. Its subcellular location is the flagellum axoneme. Microtubule inner protein involved in the attachment of outer dynein arms (ODAs) to dynein-decorated doublet microtubules (DMTs) in cilia axoneme, which is required for motile cilia beating. The protein is Piercer of microtubule wall 2 protein (PIERCE2) of Bos taurus (Bovine).